The sequence spans 108 residues: Cell division topological specificity factor (108 aa).

It belongs to the MinE family.

Its function is as follows. Prevents the cell division inhibition by proteins MinC and MinD at internal division sites while permitting inhibition at polar sites. This ensures cell division at the proper site by restricting the formation of a division septum at the midpoint of the long axis of the cell. This is Cell division topological specificity factor from Prochlorococcus marinus (strain MIT 9215).